The following is a 95-amino-acid chain: Aspartyl/glutamyl-tRNA(Asn/Gln) amidotransferase subunit C (95 aa).

This sequence belongs to the GatC family. As to quaternary structure, heterotrimer of A, B and C subunits.

It catalyses the reaction L-glutamyl-tRNA(Gln) + L-glutamine + ATP + H2O = L-glutaminyl-tRNA(Gln) + L-glutamate + ADP + phosphate + H(+). The enzyme catalyses L-aspartyl-tRNA(Asn) + L-glutamine + ATP + H2O = L-asparaginyl-tRNA(Asn) + L-glutamate + ADP + phosphate + 2 H(+). Its function is as follows. Allows the formation of correctly charged Asn-tRNA(Asn) or Gln-tRNA(Gln) through the transamidation of misacylated Asp-tRNA(Asn) or Glu-tRNA(Gln) in organisms which lack either or both of asparaginyl-tRNA or glutaminyl-tRNA synthetases. The reaction takes place in the presence of glutamine and ATP through an activated phospho-Asp-tRNA(Asn) or phospho-Glu-tRNA(Gln). This Caldanaerobacter subterraneus subsp. tengcongensis (strain DSM 15242 / JCM 11007 / NBRC 100824 / MB4) (Thermoanaerobacter tengcongensis) protein is Aspartyl/glutamyl-tRNA(Asn/Gln) amidotransferase subunit C.